Here is a 102-residue protein sequence, read N- to C-terminus: RNA-binding protein Hfq (102 aa).

The Sm domain occupies aspartate 9–valine 68. The interval valine 63 to glutamate 102 is disordered. Residues histidine 70 to glutamine 96 show a composition bias toward polar residues.

It belongs to the Hfq family. In terms of assembly, homohexamer.

RNA chaperone that binds small regulatory RNA (sRNAs) and mRNAs to facilitate mRNA translational regulation in response to envelope stress, environmental stress and changes in metabolite concentrations. Also binds with high specificity to tRNAs. The protein is RNA-binding protein Hfq of Escherichia coli O17:K52:H18 (strain UMN026 / ExPEC).